Consider the following 146-residue polypeptide: Hut operon positive regulatory protein (146 aa).

Belongs to the HutP family. As to quaternary structure, homohexamer.

Functionally, antiterminator that binds to cis-acting regulatory sequences on the mRNA in the presence of histidine, thereby suppressing transcription termination and activating the hut operon for histidine utilization. The chain is Hut operon positive regulatory protein from Bacillus anthracis (strain CDC 684 / NRRL 3495).